The primary structure comprises 229 residues: 5'-methylthioadenosine/S-adenosylhomocysteine nucleosidase (229 aa).

The Proton acceptor role is filled by Glu-12. Substrate-binding positions include Gly-78, Ile-152, and 173–174 (ME). The active-site Proton donor is the Asp-197.

The protein belongs to the PNP/UDP phosphorylase family. MtnN subfamily.

The enzyme catalyses S-adenosyl-L-homocysteine + H2O = S-(5-deoxy-D-ribos-5-yl)-L-homocysteine + adenine. It carries out the reaction S-methyl-5'-thioadenosine + H2O = 5-(methylsulfanyl)-D-ribose + adenine. The catalysed reaction is 5'-deoxyadenosine + H2O = 5-deoxy-D-ribose + adenine. It participates in amino-acid biosynthesis; L-methionine biosynthesis via salvage pathway; S-methyl-5-thio-alpha-D-ribose 1-phosphate from S-methyl-5'-thioadenosine (hydrolase route): step 1/2. In terms of biological role, catalyzes the irreversible cleavage of the glycosidic bond in both 5'-methylthioadenosine (MTA) and S-adenosylhomocysteine (SAH/AdoHcy) to adenine and the corresponding thioribose, 5'-methylthioribose and S-ribosylhomocysteine, respectively. Also cleaves 5'-deoxyadenosine, a toxic by-product of radical S-adenosylmethionine (SAM) enzymes, into 5-deoxyribose and adenine. The polypeptide is 5'-methylthioadenosine/S-adenosylhomocysteine nucleosidase (Mannheimia succiniciproducens (strain KCTC 0769BP / MBEL55E)).